Here is a 301-residue protein sequence, read N- to C-terminus: Phosphatidylglycerol--prolipoprotein diacylglyceryl transferase (301 aa).

3 helical membrane passes run leucine 17 to glycine 37, methionine 59 to tyrosine 79, and glycine 97 to tyrosine 117. Arginine 142 is an a 1,2-diacyl-sn-glycero-3-phospho-(1'-sn-glycerol) binding site. 2 helical membrane passes run methionine 230–phenylalanine 250 and leucine 265–tryptophan 285.

Belongs to the Lgt family.

The protein resides in the cell inner membrane. The enzyme catalyses L-cysteinyl-[prolipoprotein] + a 1,2-diacyl-sn-glycero-3-phospho-(1'-sn-glycerol) = an S-1,2-diacyl-sn-glyceryl-L-cysteinyl-[prolipoprotein] + sn-glycerol 1-phosphate + H(+). It participates in protein modification; lipoprotein biosynthesis (diacylglyceryl transfer). Catalyzes the transfer of the diacylglyceryl group from phosphatidylglycerol to the sulfhydryl group of the N-terminal cysteine of a prolipoprotein, the first step in the formation of mature lipoproteins. The protein is Phosphatidylglycerol--prolipoprotein diacylglyceryl transferase of Paraburkholderia xenovorans (strain LB400).